The primary structure comprises 219 residues: 7-cyano-7-deazaguanine synthase (219 aa).

Residue 10–20 participates in ATP binding; it reads FSGGQDSTTCL. Zn(2+) contacts are provided by C188, C196, C199, and C202.

The protein belongs to the QueC family. Zn(2+) is required as a cofactor.

It carries out the reaction 7-carboxy-7-deazaguanine + NH4(+) + ATP = 7-cyano-7-deazaguanine + ADP + phosphate + H2O + H(+). Its pathway is purine metabolism; 7-cyano-7-deazaguanine biosynthesis. In terms of biological role, catalyzes the ATP-dependent conversion of 7-carboxy-7-deazaguanine (CDG) to 7-cyano-7-deazaguanine (preQ(0)). This is 7-cyano-7-deazaguanine synthase from Neisseria gonorrhoeae (strain NCCP11945).